A 116-amino-acid polypeptide reads, in one-letter code: Putative membrane protein (116 aa).

A helical membrane pass occupies residues 13–33; sequence VISIITFILVIAIFVIEIVSC.

It is found in the host membrane. The protein is Putative membrane protein of Alethinophid 1 reptarenavirus (isolate AlRrV1/Boa/USA/BC/2009) (Golden Gate virus).